A 389-amino-acid chain; its full sequence is Ribonucleoside-diphosphate reductase subunit M2 (389 aa).

The residue at position 20 (Ser20) is a Phosphoserine. Residue Thr33 is modified to Phosphothreonine. The Cy motif lies at 49–51 (RRI). Asp138, Glu169, and His172 together coordinate Fe cation. Tyr176 is a catalytic residue. Fe cation is bound by residues Glu232, Glu266, and His269.

The protein belongs to the ribonucleoside diphosphate reductase small chain family. In terms of assembly, heterodimer of a large and a small subunit. Interacts (via Cy motif and when phosphorylated at Thr-33) with CCNF; the interaction occurs exclusively in G2 and early M. It depends on Fe cation as a cofactor. Post-translationally, phosphorylation on Ser-20 relieves the inhibitory effect on Wnt signaling. Phosphorylated on Thr-33 by CDK1 and CDK2; predominantly in G2 and M phase. In terms of processing, ubiquitinated by the SCF(CCNF) E3 ubiquitin-protein ligase complex; leading to its degradation by the proteasome.

The protein localises to the cytoplasm. The protein resides in the nucleus. The catalysed reaction is a 2'-deoxyribonucleoside 5'-diphosphate + [thioredoxin]-disulfide + H2O = a ribonucleoside 5'-diphosphate + [thioredoxin]-dithiol. Provides the precursors necessary for DNA synthesis. Catalyzes the biosynthesis of deoxyribonucleotides from the corresponding ribonucleotides. Inhibits Wnt signaling. The protein is Ribonucleoside-diphosphate reductase subunit M2 (RRM2) of Macaca fascicularis (Crab-eating macaque).